The chain runs to 143 residues: MKSSAKLMYGPTVFMAAMAVIYIFATMHVSDGGSVKGVEWVGSVALVLSAGLTLMLGVYLHFTEVRVDVLPEDWEEAEVADKAGTLGFFSPSSIWPAAMSGAVGFLAFGVVYFHYWMIAVGLMLLIFTITKLNLQYGVPKEKH.

A run of 4 helical transmembrane segments spans residues 7–27 (LMYGPTVFMAAMAVIYIFATM), 40–60 (WVGSVALVLSAGLTLMLGVYL), 86–106 (LGFFSPSSIWPAAMSGAVGFL), and 107–127 (AFGVVYFHYWMIAVGLMLLIF).

Belongs to the cytochrome c oxidase bacterial subunit CtaF family. In terms of assembly, associates with subunits I, II and III to form cytochrome c oxidase. The 4 subunit cytochrome c oxidase forms a supercomplex with cytochrome bc1.

It is found in the cell membrane. It carries out the reaction 4 Fe(II)-[cytochrome c] + O2 + 8 H(+)(in) = 4 Fe(III)-[cytochrome c] + 2 H2O + 4 H(+)(out). Its function is as follows. Part of cytochrome c oxidase, its function is unknown. The polypeptide is Cytochrome c oxidase polypeptide 4 (ctaF) (Corynebacterium glutamicum (strain ATCC 13032 / DSM 20300 / JCM 1318 / BCRC 11384 / CCUG 27702 / LMG 3730 / NBRC 12168 / NCIMB 10025 / NRRL B-2784 / 534)).